The primary structure comprises 148 residues: Small ribosomal subunit protein bS16 (148 aa).

Low complexity predominate over residues 111 to 122; it reads AAAGEEPVAEAT. The interval 111 to 148 is disordered; sequence AAAGEEPVAEATTPKKKGGKKAEAEDKAEEQKSEEGQA. A compositionally biased stretch (basic and acidic residues) spans 130-148; it reads KKAEAEDKAEEQKSEEGQA.

The protein belongs to the bacterial ribosomal protein bS16 family.

This chain is Small ribosomal subunit protein bS16, found in Saccharopolyspora erythraea (strain ATCC 11635 / DSM 40517 / JCM 4748 / NBRC 13426 / NCIMB 8594 / NRRL 2338).